The primary structure comprises 175 residues: Development-specific protein S homolog (175 aa).

Beta/gamma crystallin 'Greek key' domains follow at residues 2–46 (ANIT…KVPP) and 48–86 (VKAI…KVMS). The interval 87–90 (VPVQ) is connecting peptide. Beta/gamma crystallin 'Greek key' domains follow at residues 91-135 (PRAR…KPEG) and 136-175 (LKVV…RITP).

Belongs to the beta/gamma-crystallin family.

It is found in the spore. The protein resides in the perispore. This is Development-specific protein S homolog (ops) from Myxococcus xanthus.